A 194-amino-acid polypeptide reads, in one-letter code: Endoribonuclease YbeY (194 aa).

3 residues coordinate Zn(2+): histidine 151, histidine 155, and histidine 161.

It belongs to the endoribonuclease YbeY family. Zn(2+) serves as cofactor.

It is found in the cytoplasm. Single strand-specific metallo-endoribonuclease involved in late-stage 70S ribosome quality control and in maturation of the 3' terminus of the 16S rRNA. This is Endoribonuclease YbeY from Gloeobacter violaceus (strain ATCC 29082 / PCC 7421).